Consider the following 100-residue polypeptide: Large ribosomal subunit protein uL23 (100 aa).

This sequence belongs to the universal ribosomal protein uL23 family. Part of the 50S ribosomal subunit. Contacts protein L29, and trigger factor when it is bound to the ribosome.

One of the early assembly proteins it binds 23S rRNA. One of the proteins that surrounds the polypeptide exit tunnel on the outside of the ribosome. Forms the main docking site for trigger factor binding to the ribosome. The chain is Large ribosomal subunit protein uL23 from Prochlorococcus marinus (strain MIT 9312).